Reading from the N-terminus, the 462-residue chain is Golgi-associated PDZ and coiled-coil motif-containing protein (462 aa).

Residues 83-194 (KAQSVSQINH…EDEALRGHIA (112 aa)) are a coiled coil. Residues 288-371 (KVLLLKEDHE…EIEFEVVYVA (84 aa)) enclose the PDZ domain. Positions 427-449 (TDTHENGDLGTASETPLDDGASK) are disordered.

As to quaternary structure, homooligomer. Interacts with FZD5. Interacts with FZD8. Interacts with GRID2 and BECN1. Interacts with CSPG5. Interacts with CLCN3. Interacts with STX6. Interacts with CFTR. Interacts with ASIC3. Interacts with GOLGA3. Interacts with NLGN1. Interacts with RHOQ. Interacts with MARCHF2; the interaction leads to CFTR ubiquitination and degradation. May interact with CACNG2. Interacts with CCDC62.

Its subcellular location is the cytoplasm. The protein localises to the golgi apparatus membrane. The protein resides in the golgi apparatus. It is found in the trans-Golgi network membrane. It localises to the synapse. Its subcellular location is the postsynaptic density. The protein localises to the cell projection. The protein resides in the dendrite. Its function is as follows. Plays a role in intracellular protein trafficking and degradation. May regulate CFTR chloride currents and acid-induced ASIC3 currents by modulating cell surface expression of both channels. May also regulate the intracellular trafficking of the ADR1B receptor. May play a role in autophagy. Together with MARCHF2 mediates the ubiquitination and lysosomal degradation of CFTR. Overexpression results in CFTR intracellular retention and degradation in the lysosomes. This Pongo abelii (Sumatran orangutan) protein is Golgi-associated PDZ and coiled-coil motif-containing protein (GOPC).